The primary structure comprises 321 residues: Geranylgeranyl transferase type-2 subunit beta 1 (321 aa).

N-acetylserine is present on serine 2. PFTB repeat units follow at residues 14-55 (ADKH…DLLD), 62-103 (EEEV…ALFD), 110-151 (IGKV…SILK), 158-199 (VEKA…AITG), 206-247 (KDSL…IMID), and 254-296 (KAKL…SLLE). Geranylgeranyl diphosphate is bound by residues 184-186 (HAG) and 226-229 (RPEK). Aspartate 232 and cysteine 234 together coordinate Zn(2+). 235–238 (YSWW) contacts geranylgeranyl diphosphate. Histidine 284 provides a ligand contact to Zn(2+).

It belongs to the protein prenyltransferase subunit beta family. In terms of assembly, heterotrimer composed of the alpha subunit RGTA, the beta subunit RGTB and REP; within this trimer, RGTA and RGTB form the catalytic component, while REP mediates peptide substrate binding. The cofactor is Zn(2+). Requires Mg(2+) as cofactor.

It catalyses the reaction geranylgeranyl diphosphate + L-cysteinyl-[protein] = S-geranylgeranyl-L-cysteinyl-[protein] + diphosphate. With respect to regulation, the enzymatic reaction requires the aid of the Rab escort protein REP. In terms of biological role, catalyzes the transfer of a geranylgeranyl moiety from geranylgeranyl diphosphate to both cysteines of Rab proteins with the C-terminal sequence -CCXX, CXXX, -XCCX and -XCXC, such as RABA1A, RABA2A, RABF2A and RABG2. Involved in the geranylgeranylation of RABA2A. In vitro, can prenylate PGGTI targets with the C-terminal sequence Cys-aliphatic-aliphatic-X (CaaX) with leucine in the terminal position. Substrates with the C-terminal sequence -CSIL such as ARAC11/ROP1 or GG2/AGG2 are prenylated independently of REP and when the beta subunit is associated with the alpha subunit RGTA1. Required for male fertility and root tip growth. In Arabidopsis thaliana (Mouse-ear cress), this protein is Geranylgeranyl transferase type-2 subunit beta 1.